Reading from the N-terminus, the 156-residue chain is Small ribosomal subunit protein uS7 (156 aa).

The protein belongs to the universal ribosomal protein uS7 family. Part of the 30S ribosomal subunit. Contacts proteins S9 and S11.

One of the primary rRNA binding proteins, it binds directly to 16S rRNA where it nucleates assembly of the head domain of the 30S subunit. Is located at the subunit interface close to the decoding center, probably blocks exit of the E-site tRNA. The chain is Small ribosomal subunit protein uS7 from Lactobacillus johnsonii (strain CNCM I-12250 / La1 / NCC 533).